The sequence spans 237 residues: UPF0502 protein RB6530 (237 aa).

Polar residues predominate over residues 187–202 (ASSAAPSQAESGSTSP). A disordered region spans residues 187 to 211 (ASSAAPSQAESGSTSPAKAANDDRI).

This sequence belongs to the UPF0502 family.

The chain is UPF0502 protein RB6530 from Rhodopirellula baltica (strain DSM 10527 / NCIMB 13988 / SH1).